The following is a 283-amino-acid chain: Formamidopyrimidine-DNA glycosylase (283 aa).

Pro-2 acts as the Schiff-base intermediate with DNA in catalysis. Glu-3 serves as the catalytic Proton donor. The Proton donor; for beta-elimination activity role is filled by Lys-60. Residues His-95, Arg-114, and Arg-159 each contribute to the DNA site. The FPG-type zinc finger occupies 244-278 (WVYGRHNQPCRVCGTPIERIKLGGRSSHFCPQCQP). Arg-268 functions as the Proton donor; for delta-elimination activity in the catalytic mechanism.

This sequence belongs to the FPG family. In terms of assembly, monomer. Zn(2+) is required as a cofactor.

It catalyses the reaction Hydrolysis of DNA containing ring-opened 7-methylguanine residues, releasing 2,6-diamino-4-hydroxy-5-(N-methyl)formamidopyrimidine.. The catalysed reaction is 2'-deoxyribonucleotide-(2'-deoxyribose 5'-phosphate)-2'-deoxyribonucleotide-DNA = a 3'-end 2'-deoxyribonucleotide-(2,3-dehydro-2,3-deoxyribose 5'-phosphate)-DNA + a 5'-end 5'-phospho-2'-deoxyribonucleoside-DNA + H(+). In terms of biological role, involved in base excision repair of DNA damaged by oxidation or by mutagenic agents. Acts as a DNA glycosylase that recognizes and removes damaged bases. Has a preference for oxidized purines, such as 7,8-dihydro-8-oxoguanine (8-oxoG). Has AP (apurinic/apyrimidinic) lyase activity and introduces nicks in the DNA strand. Cleaves the DNA backbone by beta-delta elimination to generate a single-strand break at the site of the removed base with both 3'- and 5'-phosphates. The chain is Formamidopyrimidine-DNA glycosylase from Crocosphaera subtropica (strain ATCC 51142 / BH68) (Cyanothece sp. (strain ATCC 51142)).